The following is a 633-amino-acid chain: Chaperone protein DnaK (633 aa).

Position 198 is a phosphothreonine; by autocatalysis (T198). The disordered stretch occupies residues 599–633; it reads QQASQETPGDGDAGAAGAKKKDDDDVVDADYEEVK. Residues 622–633 show a composition bias toward acidic residues; that stretch reads DDVVDADYEEVK.

This sequence belongs to the heat shock protein 70 family.

Functionally, acts as a chaperone. This chain is Chaperone protein DnaK, found in Desulfotalea psychrophila (strain LSv54 / DSM 12343).